The sequence spans 363 residues: tRNA(Met) cytidine acetate ligase (363 aa).

ATP contacts are provided by residues isoleucine 7–leucine 20, glycine 96, asparagine 152, and arginine 175.

It belongs to the TmcAL family.

It is found in the cytoplasm. The enzyme catalyses cytidine(34) in elongator tRNA(Met) + acetate + ATP = N(4)-acetylcytidine(34) in elongator tRNA(Met) + AMP + diphosphate. Functionally, catalyzes the formation of N(4)-acetylcytidine (ac(4)C) at the wobble position of elongator tRNA(Met), using acetate and ATP as substrates. First activates an acetate ion to form acetyladenylate (Ac-AMP) and then transfers the acetyl group to tRNA to form ac(4)C34. This chain is tRNA(Met) cytidine acetate ligase, found in Streptococcus suis (strain 98HAH33).